Here is a 168-residue protein sequence, read N- to C-terminus: ATP synthase F(1) complex subunit delta, mitochondrial (168 aa).

Residues Met1–Tyr22 constitute a mitochondrion transit peptide. An N6-acetyllysine; alternate mark is found at Lys136 and Lys165. Residues Lys136 and Lys165 each carry the N6-succinyllysine; alternate modification.

It belongs to the ATPase epsilon chain family. Component of the ATP synthase complex composed at least of ATP5F1A/subunit alpha, ATP5F1B/subunit beta, ATP5MC1/subunit c (homooctomer), MT-ATP6/subunit a, MT-ATP8/subunit 8, ATP5ME/subunit e, ATP5MF/subunit f, ATP5MG/subunit g, ATP5MK/subunit k, ATP5MJ/subunit j, ATP5F1C/subunit gamma, ATP5F1D/subunit delta, ATP5F1E/subunit epsilon, ATP5PF/subunit F6, ATP5PB/subunit b, ATP5PD/subunit d, ATP5PO/subunit OSCP. ATP synthase complex consists of a soluble F(1) head domain (subunits alpha(3) and beta(3)) - the catalytic core - and a membrane F(0) domain - the membrane proton channel (subunits c, a, 8, e, f, g, k and j). These two domains are linked by a central stalk (subunits gamma, delta, and epsilon) rotating inside the F1 region and a stationary peripheral stalk (subunits F6, b, d, and OSCP). Component of a complex composed at least by ATPIF1, ATP5F1A, ATP5F1B, ATP5F1C AND ATP5F1E.

It is found in the mitochondrion. Its subcellular location is the mitochondrion inner membrane. Its function is as follows. Subunit delta, of the mitochondrial membrane ATP synthase complex (F(1)F(0) ATP synthase or Complex V) that produces ATP from ADP in the presence of a proton gradient across the membrane which is generated by electron transport complexes of the respiratory chain. ATP synthase complex consist of a soluble F(1) head domain - the catalytic core - and a membrane F(1) domain - the membrane proton channel. These two domains are linked by a central stalk rotating inside the F(1) region and a stationary peripheral stalk. During catalysis, ATP synthesis in the catalytic domain of F(1) is coupled via a rotary mechanism of the central stalk subunits to proton translocation. In vivo, can only synthesize ATP although its ATP hydrolase activity can be activated artificially in vitro. With the central stalk subunit gamma, is essential for the biogenesis of F(1) catalytic part of the ATP synthase complex namely in the formation of F1 assembly intermediate. This Mus musculus (Mouse) protein is ATP synthase F(1) complex subunit delta, mitochondrial.